The following is a 481-amino-acid chain: Innexin inx6 (481 aa).

At 1 to 21 (MYAAVKPLSNYLRLKTVRIYD) the chain is on the cytoplasmic side. Residues 22 to 42 (PIFTLHSKCTIVILLTCTFLL) traverse the membrane as a helical segment. The Extracellular segment spans residues 43-144 (SAKQYFGEPI…VTKRMYLRYY (102 aa)). The helical transmembrane segment at 145 to 165 (QWVFMILLFQSLLFYFPSFLW) threads the bilayer. Over 166–220 (KVWEGQRMEQLCCEVGDALIVEATYRTRLQMLTRYFRAQFAPIHWCYSIKYAFCE) the chain is Cytoplasmic. Residues 221–241 (LLNVFISILNFWLMDVVFNGF) form a helical membrane-spanning segment. Topologically, residues 242-302 (WYKYIHALAA…VLPLNILNEK (61 aa)) are extracellular. The helical transmembrane segment at 303–323 (IFAVLYVWFLFIALLAIMNIL) threads the bilayer. Residues 324–481 (YRLLVICCPE…MDRFFHESHA (158 aa)) are Cytoplasmic-facing.

Belongs to the pannexin family. In terms of tissue distribution, uniform expression in the imaginal wing disk. Expressed in an outer layer of the pupal developing CNS. Also expressed in pupal retina: cone cells and primary pigment cells.

The protein localises to the cell membrane. It localises to the cell junction. It is found in the gap junction. Its function is as follows. Structural components of the gap junctions. The chain is Innexin inx6 (Inx6) from Drosophila melanogaster (Fruit fly).